We begin with the raw amino-acid sequence, 195 residues long: Putative L(+)-tartrate dehydratase subunit beta (195 aa).

Residue His36 is part of the active site. Position 104 (Lys104) interacts with substrate.

Belongs to the class-I fumarase family. In terms of assembly, heterotetramer of two alpha and two beta subunits.

It catalyses the reaction (2R,3R)-tartrate = oxaloacetate + H2O. This is Putative L(+)-tartrate dehydratase subunit beta from Methanocaldococcus jannaschii (strain ATCC 43067 / DSM 2661 / JAL-1 / JCM 10045 / NBRC 100440) (Methanococcus jannaschii).